The chain runs to 341 residues: Phosphate acyltransferase (341 aa).

The protein belongs to the PlsX family. Homodimer. Probably interacts with PlsY.

The protein resides in the cytoplasm. The catalysed reaction is a fatty acyl-[ACP] + phosphate = an acyl phosphate + holo-[ACP]. It functions in the pathway lipid metabolism; phospholipid metabolism. Catalyzes the reversible formation of acyl-phosphate (acyl-PO(4)) from acyl-[acyl-carrier-protein] (acyl-ACP). This enzyme utilizes acyl-ACP as fatty acyl donor, but not acyl-CoA. The sequence is that of Phosphate acyltransferase from Chlorobaculum parvum (strain DSM 263 / NCIMB 8327) (Chlorobium vibrioforme subsp. thiosulfatophilum).